The chain runs to 258 residues: Ribosomal RNA small subunit methyltransferase A (258 aa).

S-adenosyl-L-methionine contacts are provided by H9, L11, G36, E57, D83, and N102.

This sequence belongs to the class I-like SAM-binding methyltransferase superfamily. rRNA adenine N(6)-methyltransferase family. RsmA subfamily.

The protein localises to the cytoplasm. The enzyme catalyses adenosine(1518)/adenosine(1519) in 16S rRNA + 4 S-adenosyl-L-methionine = N(6)-dimethyladenosine(1518)/N(6)-dimethyladenosine(1519) in 16S rRNA + 4 S-adenosyl-L-homocysteine + 4 H(+). Specifically dimethylates two adjacent adenosines (A1518 and A1519) in the loop of a conserved hairpin near the 3'-end of 16S rRNA in the 30S particle. May play a critical role in biogenesis of 30S subunits. In Caulobacter vibrioides (strain ATCC 19089 / CIP 103742 / CB 15) (Caulobacter crescentus), this protein is Ribosomal RNA small subunit methyltransferase A.